The following is a 240-amino-acid chain: Urease accessory protein UreD (240 aa).

This sequence belongs to the UreD family. As to quaternary structure, ureD, UreF and UreG form a complex that acts as a GTP-hydrolysis-dependent molecular chaperone, activating the urease apoprotein by helping to assemble the nickel containing metallocenter of UreC. The UreE protein probably delivers the nickel.

The protein resides in the cytoplasm. Its function is as follows. Required for maturation of urease via the functional incorporation of the urease nickel metallocenter. The sequence is that of Urease accessory protein UreD from Granulibacter bethesdensis (strain ATCC BAA-1260 / CGDNIH1).